The chain runs to 122 residues: Large ribosomal subunit protein uL14c (122 aa).

The protein belongs to the universal ribosomal protein uL14 family. As to quaternary structure, part of the 50S ribosomal subunit.

The protein resides in the plastid. The protein localises to the chloroplast. Binds to 23S rRNA. The sequence is that of Large ribosomal subunit protein uL14c from Nandina domestica (Heavenly bamboo).